The following is an 856-amino-acid chain: TPR repeat-containing protein TP_0123 (856 aa).

3 TPR repeats span residues 107 to 140 (YAAVRCVRALYQTLDTYEKQVKEFRILMDVVADD), 523 to 556 (YRTFSLLGFLTIGQSKFEDALVYFGYALDDAEQL), and 603 to 636 (TVSLFMQGRISLSLGEYAQARRCFDEAADFALQY).

This chain is TPR repeat-containing protein TP_0123, found in Treponema pallidum (strain Nichols).